A 218-amino-acid polypeptide reads, in one-letter code: Histone H1.1 (218 aa).

Residues 1–42 (MSEVALPAPAASTSPEKPSAGKKAKKPAKAAAAAKKKPAGPS) are disordered. Ser2 carries the post-translational modification N-acetylserine. Phosphoserine occurs at positions 2 and 12. Lys17 carries the N6-acetyllysine modification. Residues 20–38 (AGKKAKKPAKAAAAAKKKP) are compositionally biased toward basic residues. An N6-(beta-hydroxybutyryl)lysine modification is found at Lys37. The region spanning 39–112 (AGPSVSELIV…GASGSFKLNK (74 aa)) is the H15 domain. Position 44 is a phosphoserine (Ser44). N6-(beta-hydroxybutyryl)lysine is present on Lys55. Arg57 carries the post-translational modification Citrulline. The residue at position 67 (Lys67) is an N6-(beta-hydroxybutyryl)lysine. N6-acetyllysine is present on Lys78. N6-(beta-hydroxybutyryl)lysine is present on Lys88. N6-(beta-hydroxybutyryl)lysine; alternate is present on Lys93. Lys93 is subject to N6-acetyllysine; alternate. Ser107 carries the post-translational modification Phosphoserine; by PKC. Lys109 carries the post-translational modification N6-(beta-hydroxybutyryl)lysine. The tract at residues 116–218 (SVDAKPTATK…KPKKAAPKKK (103 aa)) is disordered. Low complexity predominate over residues 119–149 (AKPTATKVATKTKVTSASKKPKKASGAAAAK). Residue Lys125 is modified to N6-acetyllysine. Composition is skewed to basic residues over residues 150–183 (KSVKTPKKARKSVLTKKSSKSPKKPKAVKPKKVA) and 190–218 (KAVKPKGAKVKVTKPKTAAKPKKAAPKKK). Thr206 carries the phosphothreonine modification.

The protein belongs to the histone H1/H5 family. Interacts with DFFB. H1 histones are progressively phosphorylated during the cell cycle, becoming maximally phosphorylated during late G2 phase and M phase, and being dephosphorylated sharply thereafter. Post-translationally, citrullination at Arg-57 (H1R54ci) by PADI4 takes place within the DNA-binding site of H1 and results in its displacement from chromatin and global chromatin decondensation, thereby promoting pluripotency and stem cell maintenance.

The protein resides in the nucleus. Its subcellular location is the chromosome. H1 histones bind to linker DNA between nucleosomes forming the macromolecular structure known as the chromatin fiber. H1 histones are necessary for the condensation of nucleosome chains into higher-order structured fibers. Also acts as a regulator of individual gene transcription through chromatin remodeling. The chain is Histone H1.1 from Bos taurus (Bovine).